We begin with the raw amino-acid sequence, 139 residues long: 6,7-dimethyl-8-ribityllumazine synthase (139 aa).

Residues Phe-11, 42 to 44 (ALE), and 66 to 68 (VVI) contribute to the 5-amino-6-(D-ribitylamino)uracil site. 71–72 (ET) is a binding site for (2S)-2-hydroxy-3-oxobutyl phosphate. His-74 acts as the Proton donor in catalysis. Asn-98 serves as a coordination point for 5-amino-6-(D-ribitylamino)uracil. A (2S)-2-hydroxy-3-oxobutyl phosphate-binding site is contributed by Arg-112.

This sequence belongs to the DMRL synthase family.

The enzyme catalyses (2S)-2-hydroxy-3-oxobutyl phosphate + 5-amino-6-(D-ribitylamino)uracil = 6,7-dimethyl-8-(1-D-ribityl)lumazine + phosphate + 2 H2O + H(+). It participates in cofactor biosynthesis; riboflavin biosynthesis; riboflavin from 2-hydroxy-3-oxobutyl phosphate and 5-amino-6-(D-ribitylamino)uracil: step 1/2. Catalyzes the formation of 6,7-dimethyl-8-ribityllumazine by condensation of 5-amino-6-(D-ribitylamino)uracil with 3,4-dihydroxy-2-butanone 4-phosphate. This is the penultimate step in the biosynthesis of riboflavin. In Zymomonas mobilis subsp. mobilis (strain ATCC 31821 / ZM4 / CP4), this protein is 6,7-dimethyl-8-ribityllumazine synthase.